The primary structure comprises 685 residues: MESDKMEIYESLIRWLGVLQLSAPHENIQQLSDGVALAQALNLIAPEMFSEGWLAKIKVDVGHNWRLKVSNLKKIIEGVYVYYQDILSLNLSEKLRPDAMKIAEKCDGYELGRLLQLILGCAVNCLEKQKYITQIMELEESLQRNIMAALQDIEYVWQGVSPSRNSINATSLDVKTLQEDRDSLAQKCHETNKKMLILIEEKSVLQQEITKLQALIARYENPNLIGDDGTSLGPVQLGSTRYNDLRKVVDSLKDELLQAETARDDLKMKSAMQEKEIADLQVKIDELHTATAEIAQLKDEIDILKEANDKLKMCETQLLTYKKKLEDYNDLKKQIKMLEECSAEYLKQNLQHEEEAKKYSGLKGQVELYKKEIQDLHAKLDSEMSKTVKTEFEYNQLQAKLSAVQREKENLLSERDVLRETCDELKCGQAAEDSESGNTMSKELHSSDVRDRIERLERENKVLREGQGGQTALSQLLDDANQRNEKLRDQLKAANQRVLLLSQHHNEDISSKSDMDIQLKQALELNEQRSSQIDEAQSQMTQLHTKIANLEAALAAKDQELLAADSRYKKCVEKAKEVIKTLDPRAINEALLLEKPSQDGEASSSSATGSGGDASTLTSTGSGRVPMGVQEEQLIATAFYRLGMTCQREAVDSRLALLSGPGQSFLSRQRQPAPRKPMNMPFAKK.

The Calponin-homology (CH) domain maps to 6–122 (MEIYESLIRW…RLLQLILGCA (117 aa)). Positions 134–570 (QIMELEESLQ…LLAADSRYKK (437 aa)) form a coiled coil. Disordered stretches follow at residues 430–449 (AAED…SSDV), 593–625 (LEKP…SGRV), and 661–685 (PGQS…FAKK). Residues 602–623 (ASSSSATGSGGDASTLTSTGSG) are compositionally biased toward low complexity. A compositionally biased stretch (polar residues) spans 661 to 670 (PGQSFLSRQR).

Belongs to the hook family. In terms of assembly, homodimer. Interacts with microtubules via its N-terminus.

The protein resides in the cytoplasm. The protein localises to the cytoskeleton. It is found in the endosome. In terms of biological role, involved in endocytic trafficking. Probably acts as a cytoskeletal linker protein that tethers endosome vesicles to the cytoskeleton. The polypeptide is Protein hook (Aedes aegypti (Yellowfever mosquito)).